A 66-amino-acid polypeptide reads, in one-letter code: UPF0337 protein SpyM3_1723 (66 aa).

The span at 1–10 shows a compositional bias: basic and acidic residues; sequence MSEEKLKSKI. Positions 1–23 are disordered; that stretch reads MSEEKLKSKIEQASGGLKEGAGK.

The protein belongs to the UPF0337 (CsbD) family.

In Streptococcus pyogenes serotype M3 (strain ATCC BAA-595 / MGAS315), this protein is UPF0337 protein SpyM3_1723.